A 560-amino-acid polypeptide reads, in one-letter code: Formate--tetrahydrofolate ligase (560 aa).

Residue 70–77 (TPAGEGKT) coordinates ATP.

Belongs to the formate--tetrahydrofolate ligase family.

It carries out the reaction (6S)-5,6,7,8-tetrahydrofolate + formate + ATP = (6R)-10-formyltetrahydrofolate + ADP + phosphate. The protein operates within one-carbon metabolism; tetrahydrofolate interconversion. The polypeptide is Formate--tetrahydrofolate ligase (Methanocorpusculum labreanum (strain ATCC 43576 / DSM 4855 / Z)).